A 444-amino-acid chain; its full sequence is Elongation factor 1-alpha (444 aa).

Residues 15-236 (KPHINLAVVG…VLDTFQPPPR (222 aa)) enclose the tr-type G domain. Residues 24-31 (GHVDNGKS) form a G1 region. 24–31 (GHVDNGKS) contacts GTP. Residue S31 participates in Mg(2+) binding. Residues 80-84 (GVTIE) form a G2 region. Residues 101-104 (DLPG) are G3. GTP is bound by residues 101-105 (DLPGH) and 163-166 (NKMD). The tract at residues 163–166 (NKMD) is G4. A G5 region spans residues 202-204 (SAV).

The protein belongs to the TRAFAC class translation factor GTPase superfamily. Classic translation factor GTPase family. EF-Tu/EF-1A subfamily.

Its subcellular location is the cytoplasm. The enzyme catalyses GTP + H2O = GDP + phosphate + H(+). Its function is as follows. GTP hydrolase that promotes the GTP-dependent binding of aminoacyl-tRNA to the A-site of ribosomes during protein biosynthesis. The chain is Elongation factor 1-alpha from Pyrobaculum arsenaticum (strain DSM 13514 / JCM 11321 / PZ6).